A 210-amino-acid chain; its full sequence is Putative Dihydrofolate reductase (210 aa).

Residues 4-184 (TLYCVVAVDT…IFYMFETYIK (181 aa)) enclose the DHFR domain.

This sequence belongs to the dihydrofolate reductase family.

It catalyses the reaction (6S)-5,6,7,8-tetrahydrofolate + NADP(+) = 7,8-dihydrofolate + NADPH + H(+). The chain is Putative Dihydrofolate reductase (ORF2) from Human herpesvirus 8 type P (isolate GK18) (HHV-8).